The chain runs to 443 residues: Tol-Pal system protein TolB (443 aa).

Positions 1–18 (MRNIVYFILTLFSLTSYA) are cleaved as a signal peptide.

This sequence belongs to the TolB family. The Tol-Pal system is composed of five core proteins: the inner membrane proteins TolA, TolQ and TolR, the periplasmic protein TolB and the outer membrane protein Pal. They form a network linking the inner and outer membranes and the peptidoglycan layer.

The protein resides in the periplasm. Functionally, part of the Tol-Pal system, which plays a role in outer membrane invagination during cell division and is important for maintaining outer membrane integrity. This is Tol-Pal system protein TolB from Rickettsia prowazekii (strain Madrid E).